The chain runs to 304 residues: tRNA dimethylallyltransferase (304 aa).

10 to 17 (GPTASGKT) is an ATP binding site. Residue 12 to 17 (TASGKT) coordinates substrate. 3 interaction with substrate tRNA regions span residues 35–38 (DSAL), 159–163 (QRLSR), and 240–245 (RCVGYR).

It belongs to the IPP transferase family. In terms of assembly, monomer. Requires Mg(2+) as cofactor.

It catalyses the reaction adenosine(37) in tRNA + dimethylallyl diphosphate = N(6)-dimethylallyladenosine(37) in tRNA + diphosphate. Its function is as follows. Catalyzes the transfer of a dimethylallyl group onto the adenine at position 37 in tRNAs that read codons beginning with uridine, leading to the formation of N6-(dimethylallyl)adenosine (i(6)A). This is tRNA dimethylallyltransferase from Shewanella sp. (strain W3-18-1).